A 95-amino-acid polypeptide reads, in one-letter code: Aspartyl/glutamyl-tRNA(Asn/Gln) amidotransferase subunit C (95 aa).

This sequence belongs to the GatC family. As to quaternary structure, heterotrimer of A, B and C subunits.

The enzyme catalyses L-glutamyl-tRNA(Gln) + L-glutamine + ATP + H2O = L-glutaminyl-tRNA(Gln) + L-glutamate + ADP + phosphate + H(+). It catalyses the reaction L-aspartyl-tRNA(Asn) + L-glutamine + ATP + H2O = L-asparaginyl-tRNA(Asn) + L-glutamate + ADP + phosphate + 2 H(+). Allows the formation of correctly charged Asn-tRNA(Asn) or Gln-tRNA(Gln) through the transamidation of misacylated Asp-tRNA(Asn) or Glu-tRNA(Gln) in organisms which lack either or both of asparaginyl-tRNA or glutaminyl-tRNA synthetases. The reaction takes place in the presence of glutamine and ATP through an activated phospho-Asp-tRNA(Asn) or phospho-Glu-tRNA(Gln). This Geobacter sulfurreducens (strain ATCC 51573 / DSM 12127 / PCA) protein is Aspartyl/glutamyl-tRNA(Asn/Gln) amidotransferase subunit C.